The following is a 270-amino-acid chain: NFAT activation molecule 1 (270 aa).

An N-terminal signal peptide occupies residues 1–42 (MENQPVRWRALPGLPRPPGLPAAPWLLLGVLLLPGTLRLAGG). Residues 43-163 (QSVTHTGLPI…YREPPQSPQK (121 aa)) are Extracellular-facing. The Ig-like V-type domain occupies 50–150 (LPIMASLANT…RGSGTFILVR (101 aa)). A disulfide bond links Cys-65 and Cys-114. N-linked (GlcNAc...) asparagine glycosylation occurs at Asn-107. A helical transmembrane segment spans residues 164 to 184 (LLLFGFTGLLSVLSVVGTALL). Topologically, residues 185–270 (LWNKKRMRGP…GELNLVYENL (86 aa)) are cytoplasmic. The disordered stretch occupies residues 190–219 (RMRGPGKDPTRKCPDPRSASSPKQHPSESV). Residues 194 to 204 (PGKDPTRKCPD) show a composition bias toward basic and acidic residues. A compositionally biased stretch (polar residues) spans 207–219 (SASSPKQHPSESV). Residues 209-237 (SSPKQHPSESVYTALQRRETEVYACIENE) form the ITAM domain. 2 positions are modified to phosphotyrosine: Tyr-220 and Tyr-231. The tract at residues 234 to 262 (IENEDGSSPTAKQSPLSQERPHRFEDDGE) is disordered. The segment covering 239-250 (GSSPTAKQSPLS) has biased composition (polar residues).

No direct interaction with the B-cell antigen receptor (BCR). Interacts with SYK; probably involved in BCR signaling. Interacts with ZAP70. Post-translationally, N-glycosylated. In terms of tissue distribution, highly expressed in neutrophils, primary monocytes, mast cells, monocytic cell lines and lymphocytes. Also expressed in spleen B and T-cells, and lung. Expressed at low level in non-immune tissue.

It localises to the cell membrane. May function in immune system as a receptor which activates via the calcineurin/NFAT-signaling pathway the downstream cytokine gene promoters. Activates the transcription of IL-13 and TNF-alpha promoters. May be involved in the regulation of B-cell, but not T-cell, development. Overexpression activates downstream effectors without ligand binding or antibody cross-linking. The polypeptide is NFAT activation molecule 1 (NFAM1) (Homo sapiens (Human)).